The primary structure comprises 793 residues: Protein smoothened (793 aa).

The first 32 residues, 1–32 (MAAGRPVRGPELAPRRLLQLLLLVLLGGPGRG), serve as a signal peptide directing secretion. Over 33-237 (AALSGNVTGP…EAEHQDMHSY (205 aa)) the chain is Extracellular. The segment at 35–61 (LSGNVTGPGPHSASGSSRRDVPVTSPP) is disordered. The N-linked (GlcNAc...) asparagine glycan is linked to Asn-38. 5 disulfide bridges follow: Cys-68–Cys-182, Cys-74–Cys-138, Cys-82–Cys-131, Cys-122–Cys-158, and Cys-151–Cys-173. Positions 69–185 (GRAAHCEPLR…DHFPEGCPNE (117 aa)) constitute an FZ domain. A cholesterol-binding site is contributed by Asp-99. An N-linked (GlcNAc...) asparagine glycan is attached at Asn-192. Intrachain disulfides connect Cys-197–Cys-217, Cys-221–Cys-299, and Cys-318–Cys-394. The chain crosses the membrane as a helical span at residues 238-258 (IAAFGAVTGLCTLFTLATFVA). Residues 259 to 265 (DWRNSNR) are Cytoplasmic-facing. Residues 266 to 286 (YPAVILFYVNACFFVGSIGWL) form a helical membrane-spanning segment. Residues 287–318 (AQFMDGARREIVCRADGTMRFGEPTSSETLSC) are Extracellular-facing. A helical membrane pass occupies residues 319–339 (VIIFVIVYYALMAGVVWFVVL). Over 340 to 362 (TYAWHTSFKALGTTYQPLSGKTS) the chain is Cytoplasmic. A helical membrane pass occupies residues 363 to 383 (YFHLLTWSLPFVLTVAILAVA). At 384–406 (QVDGDSVSGICFVGYKNYRYRAG) the chain is on the extracellular side. Tyr-398 contributes to the cholesterol binding site. Residues 407–427 (FVLAPIGLVLIVGGYFLIRGV) form a helical membrane-spanning segment. The Cytoplasmic segment spans residues 428–455 (MTLFSIKSNHPGLLSEKAASKINETMLR). The chain crosses the membrane as a helical span at residues 456–476 (LGIFGFLAFGFVLITFSCHFY). Residues 477–528 (DFFNQAEWERSFRDYVLCQANVTIGLPTKKPIPDCEIKNRPSLLVEKINLFA) lie on the Extracellular side of the membrane. Cys-494 and Cys-511 form a disulfide bridge. N-linked (GlcNAc...) asparagine glycosylation is present at Asn-497. The chain crosses the membrane as a helical span at residues 529–549 (MFGTGIAMSTWVWTKATLLIW). The interval 542–573 (TKATLLIWRRTWCRLTGHSDDEPKRIKKSKMI) is interaction with BBS5 and BBS7. Over 550–793 (RRTWCRLTGH…AEILDADSDF (244 aa)) the chain is Cytoplasmic. Ser-560, Ser-578, and Ser-594 each carry phosphoserine. Positions 574-657 (AKAFSKRREL…TPVPPEEQAN (84 aa)) are required for interaction with PRKACA. Residues 585–597 (QNPGQELSFSMHT) are interaction with DLG5. A Phosphothreonine modification is found at Thr-597. Ser-599 and Ser-642 each carry phosphoserine. A phosphothreonine mark is found at Thr-644 and Thr-648. Ser-666 carries the post-translational modification Phosphoserine. Residues 674–684 (GRKKKRRKRKK) show a composition bias toward basic residues. The interval 674 to 703 (GRKKKRRKRKKEVCPLRPAPELHHSAPVPA) is disordered.

Belongs to the G-protein coupled receptor Fz/Smo family. As to quaternary structure, homodimer. Interacts (via C-terminus) with protein kinase A catalytic subunit PRKACA; interacts with free PRKACA subunits and the interaction leads to sequestration of PRKACA at the membrane, preventing PRKACA-mediated phosphorylation of GLI transcription factors. Interacts with ARRB2. Interacts with BBS5 and BBS7; the interactions are indicative for the association of SMO with the BBsome complex to facilitate ciliary localization of SMO. Interacts with KIF7, DLG5 and SDCBP. Interacts with GAS8/DRC4. Post-translationally, phosphorylation by GRK kinases is required for interaction with protein kinase A catalytic subunit PRKACA. In terms of tissue distribution, during early somite stages of embryonic development, modestly up-regulated in the cells of the node (at protein level).

The protein resides in the cell membrane. It is found in the cell projection. Its subcellular location is the cilium. Its function is as follows. G protein-coupled receptor which associates with the patched protein (PTCH) to transduce hedgehog protein signaling. Binding of sonic hedgehog (SHH) to its receptor patched prevents inhibition of smoothened (SMO) by patched. When active, SMO binds to and sequesters protein kinase A catalytic subunit PRKACA at the cell membrane, preventing PRKACA-mediated phosphorylation of GLI transcription factors which releases the GLI proteins from PRKACA-mediated inhibition and allows for transcriptional activation of hedgehog pathway target genes. Required for the accumulation of KIF7, GLI2 and GLI3 in the cilia. Interacts with DLG5 at the ciliary base to induce the accumulation of KIF7 and GLI2 at the ciliary tip for GLI2 activation. The sequence is that of Protein smoothened (Smo) from Mus musculus (Mouse).